Here is a 619-residue protein sequence, read N- to C-terminus: Putative zinc metalloprotease CT_072 (619 aa).

Position 20 (histidine 20) interacts with Zn(2+). Glutamate 21 is a catalytic residue. Position 24 (histidine 24) interacts with Zn(2+). 3 helical membrane passes run 103–125 (IFVL…GILY), 558–580 (VLNL…WEIL), and 593–610 (ALVP…FLTL).

The protein belongs to the peptidase M50B family. Requires Zn(2+) as cofactor.

It is found in the cell inner membrane. The sequence is that of Putative zinc metalloprotease CT_072 from Chlamydia trachomatis serovar D (strain ATCC VR-885 / DSM 19411 / UW-3/Cx).